Reading from the N-terminus, the 729-residue chain is Fatty acid oxidation complex subunit alpha (729 aa).

The enoyl-CoA hydratase/isomerase stretch occupies residues 1–189 (MLYQSETLQL…KVGLVDAVVA (189 aa)). Aspartate 296 serves as a coordination point for substrate. Positions 311 to 729 (SAPKQAAVLG…LLDVSISQPA (419 aa)) are 3-hydroxyacyl-CoA dehydrogenase. Residues methionine 324, aspartate 343, 400-402 (VVE), lysine 407, and serine 429 each bind NAD(+). Catalysis depends on histidine 450, which acts as the For 3-hydroxyacyl-CoA dehydrogenase activity. Residue asparagine 453 participates in NAD(+) binding. Positions 500 and 660 each coordinate substrate.

This sequence in the N-terminal section; belongs to the enoyl-CoA hydratase/isomerase family. It in the C-terminal section; belongs to the 3-hydroxyacyl-CoA dehydrogenase family. In terms of assembly, heterotetramer of two alpha chains (FadB) and two beta chains (FadA).

It catalyses the reaction a (3S)-3-hydroxyacyl-CoA + NAD(+) = a 3-oxoacyl-CoA + NADH + H(+). The enzyme catalyses a (3S)-3-hydroxyacyl-CoA = a (2E)-enoyl-CoA + H2O. The catalysed reaction is a 4-saturated-(3S)-3-hydroxyacyl-CoA = a (3E)-enoyl-CoA + H2O. It carries out the reaction (3S)-3-hydroxybutanoyl-CoA = (3R)-3-hydroxybutanoyl-CoA. It catalyses the reaction a (3Z)-enoyl-CoA = a 4-saturated (2E)-enoyl-CoA. The enzyme catalyses a (3E)-enoyl-CoA = a 4-saturated (2E)-enoyl-CoA. Its pathway is lipid metabolism; fatty acid beta-oxidation. Involved in the aerobic and anaerobic degradation of long-chain fatty acids via beta-oxidation cycle. Catalyzes the formation of 3-oxoacyl-CoA from enoyl-CoA via L-3-hydroxyacyl-CoA. It can also use D-3-hydroxyacyl-CoA and cis-3-enoyl-CoA as substrate. The polypeptide is Fatty acid oxidation complex subunit alpha (Yersinia enterocolitica serotype O:8 / biotype 1B (strain NCTC 13174 / 8081)).